The chain runs to 94 residues: Co-chaperonin GroES (94 aa).

This sequence belongs to the GroES chaperonin family. In terms of assembly, heptamer of 7 subunits arranged in a ring. Interacts with the chaperonin GroEL.

The protein resides in the cytoplasm. Together with the chaperonin GroEL, plays an essential role in assisting protein folding. The GroEL-GroES system forms a nano-cage that allows encapsulation of the non-native substrate proteins and provides a physical environment optimized to promote and accelerate protein folding. GroES binds to the apical surface of the GroEL ring, thereby capping the opening of the GroEL channel. The polypeptide is Co-chaperonin GroES (Alkaliphilus oremlandii (strain OhILAs) (Clostridium oremlandii (strain OhILAs))).